We begin with the raw amino-acid sequence, 816 residues long: Nicotine 6-hydroxylase large subunit (816 aa).

Position 745 (glutamate 745) interacts with Mo-molybdopterin cytosine dinucleotide.

This sequence belongs to the xanthine dehydrogenase family. Heterotrimer composed of a large subunit (NdhL), a medium subunit (NdhM) and a small subunit (NdhS). Mo-molybdopterin cytosine dinucleotide is required as a cofactor.

The protein localises to the cytoplasm. It catalyses the reaction (R)-nicotine + A + H2O = (R)-6-hydroxynicotine + AH2. The enzyme catalyses (S)-nicotine + A + H2O = (S)-6-hydroxynicotine + AH2. The protein operates within alkaloid degradation; nicotine degradation; 6-hydroxypseudooxynicotine from nicotine (R-isomer route): step 1/2. It participates in alkaloid degradation; nicotine degradation; 6-hydroxypseudooxynicotine from nicotine (S-isomer route): step 1/2. Nicotine dehydrogenase activity is inhibited by tungsten. Its function is as follows. Component of the nicotine 6-hydroxylase, which is involved in the degradation of nicotine. Catalyzes the hydroxylation of the pyridine ring at C6 to form 6-hydroxynicotine. Can use both L-nicotine and D-nicotine. This chain is Nicotine 6-hydroxylase large subunit, found in Paenarthrobacter nicotinovorans (Arthrobacter nicotinovorans).